The sequence spans 317 residues: 4-hydroxy-3-methylbut-2-enyl diphosphate reductase (317 aa).

Residue cysteine 12 coordinates [4Fe-4S] cluster. Histidine 41 and histidine 74 together coordinate (2E)-4-hydroxy-3-methylbut-2-enyl diphosphate. Histidine 41 and histidine 74 together coordinate dimethylallyl diphosphate. Histidine 41 and histidine 74 together coordinate isopentenyl diphosphate. Cysteine 97 lines the [4Fe-4S] cluster pocket. Histidine 125 lines the (2E)-4-hydroxy-3-methylbut-2-enyl diphosphate pocket. Histidine 125 is a dimethylallyl diphosphate binding site. Isopentenyl diphosphate is bound at residue histidine 125. Glutamate 127 acts as the Proton donor in catalysis. Threonine 168 is a binding site for (2E)-4-hydroxy-3-methylbut-2-enyl diphosphate. Cysteine 198 lines the [4Fe-4S] cluster pocket. The (2E)-4-hydroxy-3-methylbut-2-enyl diphosphate site is built by serine 226, serine 227, asparagine 228, and serine 270. Dimethylallyl diphosphate-binding residues include serine 226, serine 227, asparagine 228, and serine 270. Residues serine 226, serine 227, asparagine 228, and serine 270 each contribute to the isopentenyl diphosphate site.

It belongs to the IspH family. As to quaternary structure, homodimer. [4Fe-4S] cluster is required as a cofactor.

The catalysed reaction is isopentenyl diphosphate + 2 oxidized [2Fe-2S]-[ferredoxin] + H2O = (2E)-4-hydroxy-3-methylbut-2-enyl diphosphate + 2 reduced [2Fe-2S]-[ferredoxin] + 2 H(+). It carries out the reaction dimethylallyl diphosphate + 2 oxidized [2Fe-2S]-[ferredoxin] + H2O = (2E)-4-hydroxy-3-methylbut-2-enyl diphosphate + 2 reduced [2Fe-2S]-[ferredoxin] + 2 H(+). Its pathway is isoprenoid biosynthesis; dimethylallyl diphosphate biosynthesis; dimethylallyl diphosphate from (2E)-4-hydroxy-3-methylbutenyl diphosphate: step 1/1. It participates in isoprenoid biosynthesis; isopentenyl diphosphate biosynthesis via DXP pathway; isopentenyl diphosphate from 1-deoxy-D-xylulose 5-phosphate: step 6/6. Catalyzes the conversion of 1-hydroxy-2-methyl-2-(E)-butenyl 4-diphosphate (HMBPP) into a mixture of isopentenyl diphosphate (IPP) and dimethylallyl diphosphate (DMAPP). Acts in the terminal step of the DOXP/MEP pathway for isoprenoid precursor biosynthesis. This is 4-hydroxy-3-methylbut-2-enyl diphosphate reductase from Serratia proteamaculans (strain 568).